The following is a 72-amino-acid chain: Translation initiation factor IF-1 (72 aa).

Residues 1-72 (MAKDDVIEVE…TRGRITYRYK (72 aa)) enclose the S1-like domain. At Tyr60 the chain carries Phosphotyrosine.

It belongs to the IF-1 family. Component of the 30S ribosomal translation pre-initiation complex which assembles on the 30S ribosome in the order IF-2 and IF-3, IF-1 and N-formylmethionyl-tRNA(fMet); mRNA recruitment can occur at any time during PIC assembly.

It is found in the cytoplasm. Its function is as follows. One of the essential components for the initiation of protein synthesis. Stabilizes the binding of IF-2 and IF-3 on the 30S subunit to which N-formylmethionyl-tRNA(fMet) subsequently binds. Helps modulate mRNA selection, yielding the 30S pre-initiation complex (PIC). Upon addition of the 50S ribosomal subunit IF-1, IF-2 and IF-3 are released leaving the mature 70S translation initiation complex. The chain is Translation initiation factor IF-1 from Geobacillus thermodenitrificans (strain NG80-2).